The primary structure comprises 196 residues: Type-4 uracil-DNA glycosylase (196 aa).

Positions 13 and 16 each coordinate [4Fe-4S] cluster. Uracil-binding positions include 40–42, phenylalanine 54, and asparagine 80; that span reads GEA. Positions 84 and 100 each coordinate [4Fe-4S] cluster. Histidine 162 is a binding site for uracil.

It belongs to the uracil-DNA glycosylase (UDG) superfamily. Type 4 (UDGa) family.

It carries out the reaction Hydrolyzes single-stranded DNA or mismatched double-stranded DNA and polynucleotides, releasing free uracil.. Removes uracil bases that are present in DNA as a result of either deamination of cytosine or misincorporation of dUMP instead of dTMP. Can remove uracil from double-stranded DNA containing either a U/G or U/A base pair as well as from single-stranded DNA. In Pyrobaculum aerophilum (strain ATCC 51768 / DSM 7523 / JCM 9630 / CIP 104966 / NBRC 100827 / IM2), this protein is Type-4 uracil-DNA glycosylase.